Consider the following 912-residue polypeptide: Protein translocase subunit SecA (912 aa).

ATP-binding positions include Gln-87, 105 to 109, and Asp-512; that span reads GEGKT. Positions 896, 898, 907, and 908 each coordinate Zn(2+).

Belongs to the SecA family. Monomer and homodimer. Part of the essential Sec protein translocation apparatus which comprises SecA, SecYEG and auxiliary proteins SecDF-YajC and YidC. It depends on Zn(2+) as a cofactor.

The protein localises to the cell inner membrane. It is found in the cytoplasm. It catalyses the reaction ATP + H2O + cellular proteinSide 1 = ADP + phosphate + cellular proteinSide 2.. Part of the Sec protein translocase complex. Interacts with the SecYEG preprotein conducting channel. Has a central role in coupling the hydrolysis of ATP to the transfer of proteins into and across the cell membrane, serving both as a receptor for the preprotein-SecB complex and as an ATP-driven molecular motor driving the stepwise translocation of polypeptide chains across the membrane. This chain is Protein translocase subunit SecA, found in Pseudomonas fluorescens (strain Pf0-1).